We begin with the raw amino-acid sequence, 469 residues long: MDIENEQTLNVNPTDPDNLSDSLFSGDEENAGTEEIKNEINGNWISASTINEARINAKAKRRLRKNSSRDSGRGDSVSDNGSEAVRSGVAVPTSPKGRLLDRRSRSGKGRGLPKKGGAGGKGVWGTPGQVYDVEEVDVKDPNYDDDQENCVYETVVLPLDETAFEKTLTPIIQEYFEHGDTNEVAEMLRDLNLGEMKSGVPVLAVSLALEGKASHREMTSKLLSDLCGTVMSTNDVEKSFDKLLKDLPELALDTPRAPQLVGQFIARAVGDGILCNTYIDSYKGTVDCVQARAALDKATVLLSMSKGGKRKDSVWGSGGGQQPVNHLVKEIDMLLKEYLLSGDISEAEHCLKELEVPHFHHELVYEAIVMVLESTGESAFKMILDLLKSLWKSSTITIDQMKRGYERIYNEIPDINLDVPHSYSVLERFVEECFQAGIISKQLRDLCPSRGRKRFVSEGDGGRLKPESY.

N-acetylmethionine is present on M1. Positions 1–23 (MDIENEQTLNVNPTDPDNLSDSL) are enriched in polar residues. 2 disordered regions span residues 1 to 37 (MDIENEQTLNVNPTDPDNLSDSLFSGDEENAGTEEIK) and 58 to 128 (KAKR…GTPG). S25 is modified (phosphoserine). Positions 58 to 64 (KAKRRLR) match the Nuclear localization signal motif. S67 is modified (phosphoserine; by PKB and RPS6KB1). Phosphoserine is present on residues S68, S71, S76, S78, and S94. The Phosphodegron signature appears at 70-76 (DSGRGDS). The span at 114 to 125 (KKGGAGGKGVWG) shows a compositional bias: gly residues. The residue at position 152 (Y152) is a Phosphotyrosine. Residues 163 to 284 (AFEKTLTPII…CNTYIDSYKG (122 aa)) enclose the MI 1 domain. Residues S313 and S317 each carry the phosphoserine modification. An MI 2 domain is found at 326-449 (HLVKEIDMLL…SKQLRDLCPS (124 aa)). Residues 448–454 (PSRGRKR) carry the Nuclear localization signal motif. The residue at position 457 (S457) is a Phosphoserine; by PKB.

It belongs to the PDCD4 family. In terms of assembly, interacts (via MI domains) with EIF4A1 and EIF4A2 (via N-terminal domain). Heterotrimer with EIF4A1; one molecule of PDCD4 binds two molecules of EIF4A1. Interacts with EIF4G1. May form a complex with EIF4A1 and EIF4G1. The interaction between PDCD4 and EIF4A1 interferes with the interaction between EIF4A1 and EIF4G. When phosphorylated, interacts with BTRC and FBXW11. Polyubiquitinated, leading to its proteasomal degradation. Rapidly degraded in response to mitogens. Phosphorylation of the phosphodegron promotes interaction with BTRC and proteasomal degradation. In terms of processing, phosphorylated at Ser-67 by RPS6KB1 in response to mitogens; phosphorylation promotes proteasomal degradation of PDCD4. Expressed ubiquitously. Highyly expressed in thymus and liver. Moderately expressed in brain, kidney and spleen; weakly in lung and heart. Expression is up- or down-regulated in response to apoptosis inducers. Regulated by many programmed cell death-inducing stimuli.

The protein resides in the nucleus. Its subcellular location is the cytoplasm. In terms of biological role, inhibits translation initiation and cap-dependent translation. May excert its function by hindering the interaction between EIF4A1 and EIF4G. Inhibits the helicase activity of EIF4A. Modulates the activation of JUN kinase. Down-regulates the expression of MAP4K1, thus inhibiting events important in driving invasion, namely, MAPK85 activation and consequent JUN-dependent transcription. May play a role in apoptosis. Tumor suppressor. Inhibits tumor promoter-induced neoplastic transformation. Binds RNA. This chain is Programmed cell death protein 4 (Pdcd4), found in Mus musculus (Mouse).